A 120-amino-acid chain; its full sequence is NADH-ubiquinone oxidoreductase chain 3 (120 aa).

3 consecutive transmembrane segments (helical) span residues 10 to 30 (ILIL…LGYF), 62 to 82 (FYLV…LFPF), and 89 to 109 (MTLF…IGFI).

Belongs to the complex I subunit 3 family.

It is found in the mitochondrion membrane. It carries out the reaction a ubiquinone + NADH + 5 H(+)(in) = a ubiquinol + NAD(+) + 4 H(+)(out). Core subunit of the mitochondrial membrane respiratory chain NADH dehydrogenase (Complex I) that is believed to belong to the minimal assembly required for catalysis. Complex I functions in the transfer of electrons from NADH to the respiratory chain. The immediate electron acceptor for the enzyme is believed to be ubiquinone. The chain is NADH-ubiquinone oxidoreductase chain 3 (nad3) from Dictyostelium citrinum (Slime mold).